A 286-amino-acid polypeptide reads, in one-letter code: ATP phosphoribosyltransferase (286 aa).

The protein belongs to the ATP phosphoribosyltransferase family. Long subfamily. Mg(2+) is required as a cofactor.

It is found in the cytoplasm. The catalysed reaction is 1-(5-phospho-beta-D-ribosyl)-ATP + diphosphate = 5-phospho-alpha-D-ribose 1-diphosphate + ATP. The protein operates within amino-acid biosynthesis; L-histidine biosynthesis; L-histidine from 5-phospho-alpha-D-ribose 1-diphosphate: step 1/9. With respect to regulation, feedback inhibited by histidine. Its function is as follows. Catalyzes the condensation of ATP and 5-phosphoribose 1-diphosphate to form N'-(5'-phosphoribosyl)-ATP (PR-ATP). Has a crucial role in the pathway because the rate of histidine biosynthesis seems to be controlled primarily by regulation of HisG enzymatic activity. The polypeptide is ATP phosphoribosyltransferase (Cytophaga hutchinsonii (strain ATCC 33406 / DSM 1761 / CIP 103989 / NBRC 15051 / NCIMB 9469 / D465)).